A 252-amino-acid polypeptide reads, in one-letter code: 5-oxoprolinase subunit A (252 aa).

It belongs to the LamB/PxpA family. In terms of assembly, forms a complex composed of PxpA, PxpB and PxpC.

It catalyses the reaction 5-oxo-L-proline + ATP + 2 H2O = L-glutamate + ADP + phosphate + H(+). Its function is as follows. Catalyzes the cleavage of 5-oxoproline to form L-glutamate coupled to the hydrolysis of ATP to ADP and inorganic phosphate. The chain is 5-oxoprolinase subunit A from Staphylococcus saprophyticus subsp. saprophyticus (strain ATCC 15305 / DSM 20229 / NCIMB 8711 / NCTC 7292 / S-41).